The sequence spans 264 residues: Myozenin-2 (264 aa).

At R53 the chain carries Omega-N-methylarginine. The tract at residues 98 to 134 (ESGSQQAPFTPPNTPDPRSPPNPENIAPGYSGPLKEI) is disordered. A Phosphoserine modification is found at S101. A compositionally biased stretch (pro residues) spans 106–120 (FTPPNTPDPRSPPNP). 2 positions are modified to phosphothreonine: T107 and T111. S116 is modified (phosphoserine).

The protein belongs to the myozenin family. In terms of assembly, interacts via its C-terminus with spectrin repeats 3 and 4 of ACTN2. Interacts with ACTN1, LDB3, MYOT and PPP3CA.

The protein localises to the cytoplasm. The protein resides in the myofibril. It localises to the sarcomere. It is found in the z line. Functionally, myozenins may serve as intracellular binding proteins involved in linking Z line proteins such as alpha-actinin, gamma-filamin, TCAP/telethonin, LDB3/ZASP and localizing calcineurin signaling to the sarcomere. Plays an important role in the modulation of calcineurin signaling. May play a role in myofibrillogenesis. This Bos taurus (Bovine) protein is Myozenin-2 (MYOZ2).